The following is an 80-amino-acid chain: RNA-binding protein Hfq (80 aa).

A Sm domain is found at 9–69 (DVFLNQVRKE…VSTISPNSPV (61 aa)).

Belongs to the Hfq family. Homohexamer.

In terms of biological role, RNA chaperone that binds small regulatory RNA (sRNAs) and mRNAs to facilitate mRNA translational regulation in response to envelope stress, environmental stress and changes in metabolite concentrations. Also binds with high specificity to tRNAs. This is RNA-binding protein Hfq from Alkaliphilus oremlandii (strain OhILAs) (Clostridium oremlandii (strain OhILAs)).